Consider the following 650-residue polypeptide: MGKIIGIDLGTTNSCVAIMEGNQVKVIENSEGTRTTPSIIAYMDDNEVLVGAPAKRQSVTNPRNTLFAVKRLIGRRFEEKEVQKDIGLMPYAIIKADNGDAWVEAHGEKLAPPQVSAEVLRKMKKTAEDYLGEPVTEAVITVPAYFNDSQRQATKDAGRIAGLEVKRIINEPTAAALAFGLDKAEKGDRKIAVYDLGGGTFDVSIIEIADVDGEMQFEVLSTNGDTFLGGEDFDQRIIDYIIGEFKKEQGVDLSKDVLALQRLKEAAEKAKIELSSSQQTEINLPYITADASGPKHLNLKITRAKLEALVEDLVERTIEPCRIAIKDAGVKVSDIDDVILVGGQTRMPKVQEKVKEFFGKDPRRDVNPDEAVAVGAAIQGQVLSGDRKDVLLLDVTPLSLGIETLGGVMTKMISKNTTIPTKHAQVYSTADDNQSAVTIKVFQGEREMAAGNKLLGEFNLEGIPPSPRGVPQIEVTFDIDANGILHVGAKDKATGKENKITIKANSGLTDAEIDQMIKDAEANAAEDHKLRELADSRNQGDALVHSTKKALTEYGDKLDAGEKEKIEAALKSLEDALKDTSADKAAIDAKVEELGQVSQKLGEKMYADMQAQQAGAAGAAGAAEGAAHAGGAQQAADDVVDAEFKEVKKD.

Threonine 200 is modified (phosphothreonine; by autocatalysis). The span at 612–636 (QQAGAAGAAGAAEGAAHAGGAQQAA) shows a compositional bias: low complexity. The interval 612 to 650 (QQAGAAGAAGAAEGAAHAGGAQQAADDVVDAEFKEVKKD) is disordered.

The protein belongs to the heat shock protein 70 family.

Its function is as follows. Acts as a chaperone. The polypeptide is Chaperone protein DnaK (Burkholderia ambifaria (strain ATCC BAA-244 / DSM 16087 / CCUG 44356 / LMG 19182 / AMMD) (Burkholderia cepacia (strain AMMD))).